A 56-amino-acid chain; its full sequence is Large ribosomal subunit protein eL40 (56 aa).

This sequence belongs to the eukaryotic ribosomal protein eL40 family.

In Sulfurisphaera tokodaii (strain DSM 16993 / JCM 10545 / NBRC 100140 / 7) (Sulfolobus tokodaii), this protein is Large ribosomal subunit protein eL40.